We begin with the raw amino-acid sequence, 469 residues long: RuvB-like helicase 2 (469 aa).

76-83 contacts ATP; the sequence is GPPSTGKT.

The protein belongs to the RuvB family. In terms of assembly, may form heterododecamers with RVB1. Component of the SWR1 chromatin remodeling complex, the INO80 chromatin remodeling complex, and of the R2TP complex.

Its subcellular location is the nucleus. It carries out the reaction ATP + H2O = ADP + phosphate + H(+). In terms of biological role, DNA helicase which participates in several chromatin remodeling complexes, including the SWR1 and the INO80 complexes. The SWR1 complex mediates the ATP-dependent exchange of histone H2A for the H2A variant HZT1 leading to transcriptional regulation of selected genes by chromatin remodeling. The INO80 complex remodels chromatin by shifting nucleosomes and is involved in DNA repair. Also involved in pre-rRNA processing. This chain is RuvB-like helicase 2 (rvb2), found in Aspergillus fumigatus (strain ATCC MYA-4609 / CBS 101355 / FGSC A1100 / Af293) (Neosartorya fumigata).